The chain runs to 165 residues: Phosphopantetheine adenylyltransferase (165 aa).

S10 lines the substrate pocket. Residues 10 to 11 (SF) and H18 each bind ATP. The substrate site is built by K42, L74, and R88. Residues 89-91 (GLR), E99, and 124-130 (YSYLSSS) each bind ATP.

This sequence belongs to the bacterial CoaD family. Homohexamer. The cofactor is Mg(2+).

The protein localises to the cytoplasm. The enzyme catalyses (R)-4'-phosphopantetheine + ATP + H(+) = 3'-dephospho-CoA + diphosphate. It functions in the pathway cofactor biosynthesis; coenzyme A biosynthesis; CoA from (R)-pantothenate: step 4/5. Reversibly transfers an adenylyl group from ATP to 4'-phosphopantetheine, yielding dephospho-CoA (dPCoA) and pyrophosphate. The sequence is that of Phosphopantetheine adenylyltransferase from Halalkalibacterium halodurans (strain ATCC BAA-125 / DSM 18197 / FERM 7344 / JCM 9153 / C-125) (Bacillus halodurans).